Consider the following 296-residue polypeptide: Sulfotransferase 6B1 (296 aa).

Histidine 112 serves as the catalytic Proton acceptor. 3'-phosphoadenylyl sulfate-binding positions include arginine 134, serine 142, tyrosine 197, and 253 to 255 (RKG).

Belongs to the sulfotransferase 1 family.

It localises to the cytoplasm. Its subcellular location is the cytosol. The enzyme catalyses thyroxine + 3'-phosphoadenylyl sulfate = thyroxine sulfate + adenosine 3',5'-bisphosphate + H(+). With respect to regulation, strongly inhibited by the divalent metal cations Fe(2+), Hg(2+), Co(2+), Zn(2+), Cu(2+) and Cd(2+). In terms of biological role, sulfotransferase that utilizes 3'-phospho-5'-adenylyl sulfate (PAPS) as sulfonate donor to catalyze the sulfate conjugation of a variety of xenobiotic and endogenous compounds, including dopamine, T3 (triiodo-L-thyronine), T4 (thyroxine), flavonoids, isoflavonoids, and other phenolic compounds. The protein is Sulfotransferase 6B1 of Danio rerio (Zebrafish).